A 90-amino-acid polypeptide reads, in one-letter code: Small ribosomal subunit protein bS16 (90 aa).

This sequence belongs to the bacterial ribosomal protein bS16 family.

The chain is Small ribosomal subunit protein bS16 from Streptococcus pneumoniae serotype 19F (strain G54).